A 273-amino-acid chain; its full sequence is BTB and MATH domain-containing protein 15 (273 aa).

Residues 7-123 (EFVFHHTFKD…DNSFTIEACV (117 aa)) enclose the MATH domain. The region spanning 147–206 (SDVILVVGDEKFYVLKLFLASHSSYFNALFLGKFKEADQSEVTLQNIDPTDFQSLLEVLY) is the BTB domain.

As to quaternary structure, interacts with cul-3.

The protein operates within protein modification; protein ubiquitination. Its function is as follows. Probable substrate-specific adapter of an E3 ubiquitin-protein ligase complex which mediates the ubiquitination and subsequent proteasomal degradation of target proteins. This Caenorhabditis elegans protein is BTB and MATH domain-containing protein 15 (bath-15).